The sequence spans 248 residues: Probable pyridoxal 5'-phosphate synthase subunit pdx2 (248 aa).

70–72 lines the L-glutamine pocket; it reads GES. Cys106 (nucleophile) is an active-site residue. Residues Arg136 and 174-175 each bind L-glutamine; that span reads IR. Residues His221 and Glu223 each act as charge relay system in the active site.

Belongs to the glutaminase PdxT/SNO family.

It carries out the reaction aldehydo-D-ribose 5-phosphate + D-glyceraldehyde 3-phosphate + L-glutamine = pyridoxal 5'-phosphate + L-glutamate + phosphate + 3 H2O + H(+). The catalysed reaction is L-glutamine + H2O = L-glutamate + NH4(+). Its pathway is cofactor biosynthesis; pyridoxal 5'-phosphate biosynthesis. In terms of biological role, catalyzes the hydrolysis of glutamine to glutamate and ammonia as part of the biosynthesis of pyridoxal 5'-phosphate. The resulting ammonia molecule is channeled to the active site of pdx1. In Dictyostelium discoideum (Social amoeba), this protein is Probable pyridoxal 5'-phosphate synthase subunit pdx2.